Reading from the N-terminus, the 416-residue chain is MSEQSICQARASVMVYDDTSKKWVPIKPGQQGFSRINIYHNTASNTFRVVGVKLQDQQVVINYSIVKGLKYNQATPTFHQWRDARQVYGLNFASKEEATTFSNAMLFALNIMNSQEGGPSSQRQVQNGPSPDEMDIQRRQVMEQHQQQRQESLERRTSATGPILPPGHPSSAASAPVSCSGPPPPPPPPVPPPPTGATPPPPPPLPAGGAQGSSHDESSMSGLAAAIAGAKLRRVQRPEDASGGSSPSGTSKSDANRASSGGGGGGLMEEMNKLLAKRRKAASQSDKPAEKKEDESQMEDPSTSPSPGTRAASQPPNSSEAGRKPWERSNSVEKPVSSILSRTPSVAKSPEAKSPLQSQPHSRMKPAGSVNDMALDAFDLDRMKQEILEEVVRELHKVKEEIIDAIRQELSGISTT.

One can recognise a WH1 domain in the interval 1-112; the sequence is MSEQSICQAR…NAMLFALNIM (112 aa). Polar residues predominate over residues 114 to 129; it reads SQEGGPSSQRQVQNGP. Disordered stretches follow at residues 114-133 and 141-369; these read SQEG…SPDE and VMEQ…PAGS. Ser-130 is modified (phosphoserine). Residues 141–157 are compositionally biased toward basic and acidic residues; the sequence is VMEQHQQQRQESLERRT. Low complexity predominate over residues 169-180; sequence PSSAASAPVSCS. A compositionally biased stretch (pro residues) spans 181-206; the sequence is GPPPPPPPPVPPPPTGATPPPPPPLP. Positions 222 to 242 are EVH2 block A; the sequence is GLAAAIAGAKLRRVQRPEDAS. The segment at 222 to 413 is EVH2; it reads GLAAAIAGAK…DAIRQELSGI (192 aa). Residues 231 to 234 carry the KLKR motif; the sequence is KLRR. Low complexity predominate over residues 242–253; that stretch reads SGGSSPSGTSKS. Residues Ser-246 and Ser-259 each carry the phosphoserine modification. The tract at residues 265 to 282 is EVH2 block B; the sequence is GGLMEEMNKLLAKRRKAA. The segment covering 299-320 has biased composition (polar residues); sequence EDPSTSPSPGTRAASQPPNSSE. Ser-304, Ser-306, Ser-329, Ser-331, Ser-341, Ser-349, Ser-354, and Ser-369 each carry phosphoserine. Basic and acidic residues predominate over residues 321–331; sequence AGRKPWERSNS. Residues 342–362 form a required for interaction with ZDHHC17 region; sequence RTPSVAKSPEAKSPLQSQPHS. An EVH2 block C region spans residues 379 to 413; sequence DLDRMKQEILEEVVRELHKVKEEIIDAIRQELSGI.

The protein belongs to the Ena/VASP family. Homotetramer. Binds to the SH3 domains of ABL1, LYN and SRC. Also binds to profilin, with preference for isoform IIa of PFN2, and the WW domain of APBB1/FE65. Binds to SEMA6A. Interacts, via the Pro-rich region, with the C-terminal SH3 domain of DNMBP. Interacts with RAPH1. Binds, via the EVH1 domain, the Pro-rich domain of Listeria monocytogenes actA. Binds, via the EVH1 domain, the Pro-rich domain of ZYX. Interacts with FYB1. Interacts with ZDHHC17. Phosphorylated by PKA; phosphorylation abolishes binding to SH3 domains of ABL and SRC.

It is found in the cytoplasm. Its subcellular location is the cytoskeleton. It localises to the stress fiber. The protein localises to the cell projection. The protein resides in the lamellipodium. Its function is as follows. Ena/VASP proteins are actin-associated proteins involved in a range of processes dependent on cytoskeleton remodeling and cell polarity such as axon guidance and lamellipodial and filopodial dynamics in migrating cells. EVL enhances actin nucleation and polymerization. The protein is Ena/VASP-like protein (EVL) of Homo sapiens (Human).